The following is a 102-amino-acid chain: MEIGLTHYLTVGAILFGLGAFGILMNRRNVIVLLMAIELMLLAVNINLVAFSVFLNDLTGQVFTLFILTVAAAEAAIGLAILVVYFRNRGTIAVEDINMMKG.

Helical transmembrane passes span 3–23, 31–51, and 66–86; these read IGLT…AFGI, IVLL…LVAF, and FILT…VVYF.

It belongs to the complex I subunit 4L family. NDH-1 is composed of 14 different subunits. Subunits NuoA, H, J, K, L, M, N constitute the membrane sector of the complex.

It localises to the cell inner membrane. The enzyme catalyses a quinone + NADH + 5 H(+)(in) = a quinol + NAD(+) + 4 H(+)(out). Functionally, NDH-1 shuttles electrons from NADH, via FMN and iron-sulfur (Fe-S) centers, to quinones in the respiratory chain. The immediate electron acceptor for the enzyme in this species is believed to be ubiquinone. Couples the redox reaction to proton translocation (for every two electrons transferred, four hydrogen ions are translocated across the cytoplasmic membrane), and thus conserves the redox energy in a proton gradient. This is NADH-quinone oxidoreductase subunit K from Rhodospirillum centenum (strain ATCC 51521 / SW).